A 487-amino-acid chain; its full sequence is N-succinylglutamate 5-semialdehyde dehydrogenase (487 aa).

Position 221-226 (221-226) interacts with NAD(+); sequence GSSDTG. Residues E244 and C278 contribute to the active site.

It belongs to the aldehyde dehydrogenase family. AstD subfamily.

It catalyses the reaction N-succinyl-L-glutamate 5-semialdehyde + NAD(+) + H2O = N-succinyl-L-glutamate + NADH + 2 H(+). Its pathway is amino-acid degradation; L-arginine degradation via AST pathway; L-glutamate and succinate from L-arginine: step 4/5. Its function is as follows. Catalyzes the NAD-dependent reduction of succinylglutamate semialdehyde into succinylglutamate. This Burkholderia mallei (strain ATCC 23344) protein is N-succinylglutamate 5-semialdehyde dehydrogenase.